Consider the following 104-residue polypeptide: Large ribosomal subunit protein uL24 (104 aa).

Belongs to the universal ribosomal protein uL24 family. Part of the 50S ribosomal subunit.

Its function is as follows. One of two assembly initiator proteins, it binds directly to the 5'-end of the 23S rRNA, where it nucleates assembly of the 50S subunit. In terms of biological role, one of the proteins that surrounds the polypeptide exit tunnel on the outside of the subunit. The polypeptide is Large ribosomal subunit protein uL24 (Methylorubrum populi (strain ATCC BAA-705 / NCIMB 13946 / BJ001) (Methylobacterium populi)).